The chain runs to 296 residues: NADH-cytochrome b5 reductase 2 (296 aa).

A helical transmembrane segment spans residues 12–29; sequence LPIALGVGAASIATAIIL. The 105-residue stretch at 47-151 folds into the FAD-binding FR-type domain; that stretch reads NEWIDLPIIK…KGPITKWEWK (105 aa). An FAD-binding site is contributed by 154–189; that stretch reads SYDSITLLGAGTGINPLYQLVHHIAENPEDNTKIHL.

This sequence belongs to the flavoprotein pyridine nucleotide cytochrome reductase family. Requires FAD as cofactor.

Its subcellular location is the mitochondrion outer membrane. The enzyme catalyses 2 Fe(III)-[cytochrome b5] + NADH = 2 Fe(II)-[cytochrome b5] + NAD(+) + H(+). Functionally, may mediate the reduction of outer membrane cytochrome b5. This Kluyveromyces lactis (strain ATCC 8585 / CBS 2359 / DSM 70799 / NBRC 1267 / NRRL Y-1140 / WM37) (Yeast) protein is NADH-cytochrome b5 reductase 2 (MCR1).